Consider the following 233-residue polypeptide: Large ribosomal subunit protein uL1 (233 aa).

Belongs to the universal ribosomal protein uL1 family. In terms of assembly, part of the 50S ribosomal subunit.

Functionally, binds directly to 23S rRNA. The L1 stalk is quite mobile in the ribosome, and is involved in E site tRNA release. Its function is as follows. Protein L1 is also a translational repressor protein, it controls the translation of the L11 operon by binding to its mRNA. This Psychrobacter sp. (strain PRwf-1) protein is Large ribosomal subunit protein uL1.